Consider the following 757-residue polypeptide: Elongation factor G, mitochondrial (757 aa).

Residues 1-41 (MLERAALLHRLRLPAHSLPFIYNGALFGGAKRSFSATSKRC) constitute a mitochondrion transit peptide. A tr-type G domain is found at 66–347 (KLLRNIGVSA…AIVDYLPEPS (282 aa)). GTP-binding positions include 75–82 (AHIDSGKT), 146–150 (DTPGH), and 200–203 (NKMD).

Belongs to the TRAFAC class translation factor GTPase superfamily. Classic translation factor GTPase family. EF-G/EF-2 subfamily.

It is found in the mitochondrion. It participates in protein biosynthesis; polypeptide chain elongation. Mitochondrial GTPase that catalyzes the GTP-dependent ribosomal translocation step during translation elongation. During this step, the ribosome changes from the pre-translocational (PRE) to the post-translocational (POST) state as the newly formed A-site-bound peptidyl-tRNA and P-site-bound deacylated tRNA move to the P and E sites, respectively. Catalyzes the coordinated movement of the two tRNA molecules, the mRNA and conformational changes in the ribosome. The chain is Elongation factor G, mitochondrial from Eremothecium gossypii (strain ATCC 10895 / CBS 109.51 / FGSC 9923 / NRRL Y-1056) (Yeast).